Here is a 233-residue protein sequence, read N- to C-terminus: Homeobox protein Hox-B6b (233 aa).

An Antp-type hexapeptide motif is present at residues 136–141; that stretch reads IYPWMQ. Residues 155–214 constitute a DNA-binding region (homeobox); the sequence is GRRGRQTYTRYQTLELEKEFHFNRYLTRRRRIEISHALCLTERQIKIWFQNRRMKWKKEN. Residues 213-233 are disordered; sequence ENKLLNPSKTPEEEEEAEKKS. The segment covering 224 to 233 has biased composition (acidic residues); sequence EEEEEAEKKS.

It belongs to the Antp homeobox family.

It localises to the nucleus. Sequence-specific transcription factor which is part of a developmental regulatory system that provides cells with specific positional identities on the anterior-posterior axis. In Takifugu rubripes (Japanese pufferfish), this protein is Homeobox protein Hox-B6b (hoxb6b).